A 329-amino-acid polypeptide reads, in one-letter code: Pantothenate kinase (329 aa).

The disordered stretch occupies residues 1 to 22 (MPAQGPSHGELPPADAGRESSP). 107–114 (GSVAVGKS) contacts ATP.

It belongs to the prokaryotic pantothenate kinase family.

The protein localises to the cytoplasm. The catalysed reaction is (R)-pantothenate + ATP = (R)-4'-phosphopantothenate + ADP + H(+). It functions in the pathway cofactor biosynthesis; coenzyme A biosynthesis; CoA from (R)-pantothenate: step 1/5. This Nocardioides sp. (strain ATCC BAA-499 / JS614) protein is Pantothenate kinase.